The primary structure comprises 208 residues: MIIIKDAHFITSSSQLSQCPASLTSEMVVLGRSNVGKSSFINTLLGKNLAKSSSTPGKTRLANFFSTTWEDKKNALTTTFSVIDLPGFGYAKVSKSLKKEWEGFLWELLSVRTSIKLFIHLIDARHLNLEIDKNAKENIQTLLRSDQAYLSLFTKFDKLNKNEQHRLFLNAPKPFLINTTHFNALSSKYPTLEIVRQTLLKYLLTNPL.

An EngB-type G domain is found at 23–205; it reads LTSEMVVLGR…RQTLLKYLLT (183 aa). GTP contacts are provided by residues 31-38, 57-61, 84-87, 154-157, and 182-184; these read GRSNVGKS, GKTRL, DLPG, TKFD, and FNA. Positions 38 and 59 each coordinate Mg(2+).

It belongs to the TRAFAC class TrmE-Era-EngA-EngB-Septin-like GTPase superfamily. EngB GTPase family. It depends on Mg(2+) as a cofactor.

In terms of biological role, necessary for normal cell division and for the maintenance of normal septation. The chain is Probable GTP-binding protein EngB from Helicobacter acinonychis (strain Sheeba).